The sequence spans 100 residues: Putative PIN1-like protein (100 aa).

Residues 1–15 (MADEEKLPPGWEKRM) are compositionally biased toward basic and acidic residues. Disordered regions lie at residues 1–52 (MADE…QGEP) and 69–100 (LDLA…REGL). The 34-residue stretch at 5-38 (EKLPPGWEKRMSRPSGRGYYFNHITNPSQWERPS) folds into the WW domain. The segment covering 27–44 (HITNPSQWERPSGNSSSG) has biased composition (polar residues). Residues 87–100 (QRLHPEDQGRREGL) are compositionally biased toward basic and acidic residues.

In Homo sapiens (Human), this protein is Putative PIN1-like protein (PIN1P1).